The primary structure comprises 458 residues: Exodeoxyribonuclease 7 large subunit (458 aa).

The protein belongs to the XseA family. In terms of assembly, heterooligomer composed of large and small subunits.

The protein localises to the cytoplasm. The enzyme catalyses Exonucleolytic cleavage in either 5'- to 3'- or 3'- to 5'-direction to yield nucleoside 5'-phosphates.. Its function is as follows. Bidirectionally degrades single-stranded DNA into large acid-insoluble oligonucleotides, which are then degraded further into small acid-soluble oligonucleotides. The protein is Exodeoxyribonuclease 7 large subunit of Escherichia coli O6:H1 (strain CFT073 / ATCC 700928 / UPEC).